We begin with the raw amino-acid sequence, 397 residues long: Phosphoglycerate kinase (397 aa).

Substrate-binding positions include 21-23 (DVN), arginine 36, 59-62 (HFGR), arginine 119, and arginine 152. ATP contacts are provided by residues lysine 202, glutamate 324, and 354-357 (GGDT).

The protein belongs to the phosphoglycerate kinase family. Monomer.

It is found in the cytoplasm. It carries out the reaction (2R)-3-phosphoglycerate + ATP = (2R)-3-phospho-glyceroyl phosphate + ADP. The protein operates within carbohydrate degradation; glycolysis; pyruvate from D-glyceraldehyde 3-phosphate: step 2/5. This is Phosphoglycerate kinase from Cereibacter sphaeroides (strain KD131 / KCTC 12085) (Rhodobacter sphaeroides).